The following is a 234-amino-acid chain: NAD-reducing hydrogenase HoxS subunit gamma (234 aa).

The 76-residue stretch at 2–77 (SIQITIDGKT…GLNVEVNDPE (76 aa)) folds into the 2Fe-2S ferredoxin-type domain. [2Fe-2S] cluster-binding residues include C35, C46, C49, and C61. Residues 77-116 (ELVDMRKALVEFLFAEGNHNCPSCEKSGRCQLQAVGYEVD) enclose the 4Fe-4S His(Cys)3-ligated-type domain. [4Fe-4S] cluster-binding residues include H95, C97, C100, C106, C145, C148, C151, and C198.

This sequence belongs to the complex I 75 kDa subunit family. Tetramer of an alpha and a gamma subunits (flavin-containing dimer), and a delta and a nickel-containing beta subunits (hydrogenase dimer). Requires [2Fe-2S] cluster as cofactor. [4Fe-4S] cluster serves as cofactor.

The protein resides in the cytoplasm. It catalyses the reaction H2 + NAD(+) = NADH + H(+). Its function is as follows. Subunits alpha and gamma of HoxS constitute an NADH--oxidoreductase. The protein is NAD-reducing hydrogenase HoxS subunit gamma (hoxU) of Cupriavidus necator (strain ATCC 17699 / DSM 428 / KCTC 22496 / NCIMB 10442 / H16 / Stanier 337) (Ralstonia eutropha).